Reading from the N-terminus, the 597-residue chain is Elongation factor 4 (597 aa).

The 183-residue stretch at 2–184 folds into the tr-type G domain; that stretch reads NNIRNFSIIA…SLITKVPPPK (183 aa). Residues 14-19 and 131-134 contribute to the GTP site; these read DHGKST and NKID.

It belongs to the TRAFAC class translation factor GTPase superfamily. Classic translation factor GTPase family. LepA subfamily.

It is found in the cell inner membrane. The catalysed reaction is GTP + H2O = GDP + phosphate + H(+). In terms of biological role, required for accurate and efficient protein synthesis under certain stress conditions. May act as a fidelity factor of the translation reaction, by catalyzing a one-codon backward translocation of tRNAs on improperly translocated ribosomes. Back-translocation proceeds from a post-translocation (POST) complex to a pre-translocation (PRE) complex, thus giving elongation factor G a second chance to translocate the tRNAs correctly. Binds to ribosomes in a GTP-dependent manner. This is Elongation factor 4 from Janthinobacterium sp. (strain Marseille) (Minibacterium massiliensis).